Consider the following 127-residue polypeptide: Fluoride-specific ion channel FluC 1 (127 aa).

4 helical membrane passes run 4–24, 35–55, 71–91, and 101–121; these read TLLA…LVSL, VGTL…LAFF, TGFC…VYLI, and GTIL…FILV. 2 residues coordinate Na(+): G75 and T78.

It belongs to the fluoride channel Fluc/FEX (TC 1.A.43) family.

It is found in the cell inner membrane. It catalyses the reaction fluoride(in) = fluoride(out). Na(+) is not transported, but it plays an essential structural role and its presence is essential for fluoride channel function. Fluoride-specific ion channel. Important for reducing fluoride concentration in the cell, thus reducing its toxicity. The sequence is that of Fluoride-specific ion channel FluC 1 from Yersinia pestis.